A 335-amino-acid polypeptide reads, in one-letter code: MAAAPWYIRQRDTDLLGKFKFIQNQEDGRLREATNGTVNSRWSLGVSIEPRNDARNRYVNIMPYERNRVHLKTLSGNDYINASYVKVNVPGQSIEPGYYIATQGPTRKTWDQFWQMCYHNCPLDNIVIVMVTPLVEYNREKCYQYWPRGGVDDTVRIASKWESPGGANDMTQFPSDLKIEFVNVHKVKDYYTVTDIKLTPTDPLVGPVKTVHHFYFDLWKDMNKPEEVVPIMELCAHSHSLNSRGNPIIVHCSAGVGRTGTFIALDHLMHDTLDFKNITERSRHSDRATEEYTRDLIEQIVLQLRSQRMKMVQTKDQFLFIYHAAKYLNSLSVNQ.

In terms of domain architecture, Tyrosine-protein phosphatase spans 15 to 328 (LLGKFKFIQN…LFIYHAAKYL (314 aa)). Ser-83 bears the Phosphoserine; by CLK1 mark. The active-site Phosphocysteine intermediate is the Cys-252.

The protein belongs to the protein-tyrosine phosphatase family. Non-receptor class subfamily. Activated by phosphorylation at Ser-83.

It is found in the cytoplasm. It catalyses the reaction O-phospho-L-tyrosyl-[protein] + H2O = L-tyrosyl-[protein] + phosphate. Its function is as follows. Is not required for vegetative growth. This chain is Tyrosine-protein phosphatase 1 (PTP1), found in Saccharomyces cerevisiae (strain ATCC 204508 / S288c) (Baker's yeast).